Consider the following 429-residue polypeptide: Large ribosomal subunit protein mL37 (429 aa).

Residues 1–29 (MALRPVVLRRAPAHSRGILTRPGPPRPRG) constitute a mitochondrion transit peptide. The disordered stretch occupies residues 12-45 (PAHSRGILTRPGPPRPRGPLPRTPWTTRGPPPDQ). Residues 22–33 (PGPPRPRGPLPR) are compositionally biased toward pro residues.

The protein belongs to the mitochondrion-specific ribosomal protein mL37 family. Component of the mitochondrial ribosome large subunit (39S) which comprises a 16S rRNA and about 50 distinct proteins.

The protein resides in the mitochondrion. The protein is Large ribosomal subunit protein mL37 (MRPL37) of Gallus gallus (Chicken).